A 358-amino-acid chain; its full sequence is tRNA N6-adenosine threonylcarbamoyltransferase (358 aa).

His118 and His122 together coordinate Fe cation. Substrate is bound by residues 143–147, Asp176, Gly189, and Asn298; that span reads IVSGG. Residue Asp326 coordinates Fe cation.

It belongs to the KAE1 / TsaD family. It depends on Fe(2+) as a cofactor.

It is found in the cytoplasm. The enzyme catalyses L-threonylcarbamoyladenylate + adenosine(37) in tRNA = N(6)-L-threonylcarbamoyladenosine(37) in tRNA + AMP + H(+). Its function is as follows. Required for the formation of a threonylcarbamoyl group on adenosine at position 37 (t(6)A37) in tRNAs that read codons beginning with adenine. Is involved in the transfer of the threonylcarbamoyl moiety of threonylcarbamoyl-AMP (TC-AMP) to the N6 group of A37, together with TsaE and TsaB. TsaD likely plays a direct catalytic role in this reaction. The sequence is that of tRNA N6-adenosine threonylcarbamoyltransferase from Rhodopirellula baltica (strain DSM 10527 / NCIMB 13988 / SH1).